The sequence spans 486 residues: Glutamyl-tRNA(Gln) amidotransferase subunit A (486 aa).

Active-site charge relay system residues include Lys78 and Ser153. Ser177 serves as the catalytic Acyl-ester intermediate.

The protein belongs to the amidase family. GatA subfamily. As to quaternary structure, heterotrimer of A, B and C subunits.

The enzyme catalyses L-glutamyl-tRNA(Gln) + L-glutamine + ATP + H2O = L-glutaminyl-tRNA(Gln) + L-glutamate + ADP + phosphate + H(+). Allows the formation of correctly charged Gln-tRNA(Gln) through the transamidation of misacylated Glu-tRNA(Gln) in organisms which lack glutaminyl-tRNA synthetase. The reaction takes place in the presence of glutamine and ATP through an activated gamma-phospho-Glu-tRNA(Gln). The sequence is that of Glutamyl-tRNA(Gln) amidotransferase subunit A from Ruminiclostridium cellulolyticum (strain ATCC 35319 / DSM 5812 / JCM 6584 / H10) (Clostridium cellulolyticum).